The chain runs to 644 residues: DNA mismatch repair protein MutL (644 aa).

Disordered stretches follow at residues 338-390 (RPNA…ERPA) and 416-445 (QPQE…DDTQ). 2 stretches are compositionally biased toward low complexity: residues 349–366 (EATP…EASA) and 416–427 (QPQEAAEEAAGT).

This sequence belongs to the DNA mismatch repair MutL/HexB family.

In terms of biological role, this protein is involved in the repair of mismatches in DNA. It is required for dam-dependent methyl-directed DNA mismatch repair. May act as a 'molecular matchmaker', a protein that promotes the formation of a stable complex between two or more DNA-binding proteins in an ATP-dependent manner without itself being part of a final effector complex. This is DNA mismatch repair protein MutL from Chromohalobacter salexigens (strain ATCC BAA-138 / DSM 3043 / CIP 106854 / NCIMB 13768 / 1H11).